The chain runs to 25 residues: Caerin-1.4 (25 aa).

Leucine 25 carries the leucine amide modification.

Belongs to the frog skin active peptide (FSAP) family. Caerin subfamily. Expressed by the skin parotoid and/or rostral glands.

It is found in the secreted. In terms of biological role, antibacterial peptide, that adopts an alpha helical conformation which can disrupt bacterial membranes. Each caerin displays a different antimicrobial specificity. The protein is Caerin-1.4 of Ranoidea caerulea (Green tree frog).